We begin with the raw amino-acid sequence, 53 residues long: UPF0337 protein LJ_0034.1 (53 aa).

The interval 27–53 (AREVEGKAQQAKGKVKSKATEVKEDLE) is disordered. Positions 44-53 (KATEVKEDLE) are enriched in basic and acidic residues.

This sequence belongs to the UPF0337 (CsbD) family.

In Lactobacillus johnsonii (strain CNCM I-12250 / La1 / NCC 533), this protein is UPF0337 protein LJ_0034.1.